Consider the following 297-residue polypeptide: Nitrogenase iron protein (297 aa).

Residue 11–18 (GKGGIGKS) coordinates ATP. Cys99 serves as a coordination point for [4Fe-4S] cluster. Arg102 carries the ADP-ribosylarginine; by dinitrogenase reductase ADP-ribosyltransferase modification. Position 133 (Cys133) interacts with [4Fe-4S] cluster.

This sequence belongs to the NifH/BchL/ChlL family. As to quaternary structure, homodimer. The cofactor is [4Fe-4S] cluster. The reversible ADP-ribosylation of Arg-102 inactivates the nitrogenase reductase and regulates nitrogenase activity.

It carries out the reaction N2 + 8 reduced [2Fe-2S]-[ferredoxin] + 16 ATP + 16 H2O = H2 + 8 oxidized [2Fe-2S]-[ferredoxin] + 2 NH4(+) + 16 ADP + 16 phosphate + 6 H(+). Its function is as follows. The key enzymatic reactions in nitrogen fixation are catalyzed by the nitrogenase complex, which has 2 components: the iron protein and the molybdenum-iron protein. This chain is Nitrogenase iron protein, found in Mesorhizobium japonicum (strain LMG 29417 / CECT 9101 / MAFF 303099) (Mesorhizobium loti (strain MAFF 303099)).